A 132-amino-acid chain; its full sequence is uncharacterized protein (132 aa).

This is an uncharacterized protein from Gallus gallus (Chicken).